Reading from the N-terminus, the 208-residue chain is Small ribosomal subunit protein uS4 (208 aa).

Residues 30 to 49 (KSALEKRPYPPGQHGQRRSK) are disordered. Residues 98–161 (RRLDNVVYRM…KNNPQIQRSL (64 aa)) form the S4 RNA-binding domain.

This sequence belongs to the universal ribosomal protein uS4 family. In terms of assembly, part of the 30S ribosomal subunit. Contacts protein S5. The interaction surface between S4 and S5 is involved in control of translational fidelity.

One of the primary rRNA binding proteins, it binds directly to 16S rRNA where it nucleates assembly of the body of the 30S subunit. Its function is as follows. With S5 and S12 plays an important role in translational accuracy. This is Small ribosomal subunit protein uS4 from Nitratiruptor sp. (strain SB155-2).